Here is a 359-residue protein sequence, read N- to C-terminus: Epoxide hydrolase 4 (359 aa).

A helical; Signal-anchor for type II membrane protein membrane pass occupies residues 15–35 (ALLYWSLVYGYCGLCASVHLL). The region spanning 92–337 (PLMLLLHGFP…ILSEGSHWLQ (246 aa)) is the AB hydrolase-1 domain. Asp167 acts as the Nucleophile in catalysis. Catalysis depends on Tyr279, which acts as the Proton donor. Catalysis depends on His334, which acts as the Proton acceptor.

The protein belongs to the AB hydrolase superfamily. Epoxide hydrolase family.

It localises to the membrane. The chain is Epoxide hydrolase 4 (Ephx4) from Mus musculus (Mouse).